Reading from the N-terminus, the 223-residue chain is Probable tRNA-splicing endonuclease subunit tsp-1 (223 aa).

Positions 1 to 55 are disordered; it reads MESGSTPPTDKQIRENEQDGTGHQGKLLARPTSTRQQQQQQQQQPSHSVSQSVSQ. Residues 30–55 are compositionally biased toward low complexity; the sequence is RPTSTRQQQQQQQQQPSHSVSQSVSQ.

This sequence belongs to the SEN15 family. TRNA splicing endonuclease is a heterotetramer composed of tsp-2/sen2, tsp-1/sen15, tsp-4/sen34 and tsp-5/sen54. Interacts directly with tsp-4/sen34.

Non-catalytic subunit of the tRNA-splicing endonuclease complex, a complex responsible for identification and cleavage of the splice sites in pre-tRNA. It cleaves pre-tRNA at the 5' and 3' splice sites to release the intron. The products are an intron and two tRNA half-molecules bearing 2',3' cyclic phosphate and 5'-OH termini. There are no conserved sequences at the splice sites, but the intron is invariably located at the same site in the gene, placing the splice sites an invariant distance from the constant structural features of the tRNA body. The sequence is that of Probable tRNA-splicing endonuclease subunit tsp-1 (tsp-1) from Neurospora crassa (strain ATCC 24698 / 74-OR23-1A / CBS 708.71 / DSM 1257 / FGSC 987).